The chain runs to 322 residues: NADH-quinone oxidoreductase subunit H (322 aa).

8 consecutive transmembrane segments (helical) span residues 15-35 (IFQSIVILVCVLITASIMSVV), 81-101 (ITFLIAPILAFISLLLVITII), 114-134 (IGVLFFLMMASLSVYSVLLAG), 149-169 (ATAQTLSYEVFLGLSCMGVVA), 184-204 (IGLWNIIPQFFGFLAFFIAGL), 237-257 (FFIGEYISIIVVSSLISTMFF), 265-285 (FPSYFWFILKTLCFMMIFILI), and 299-319 (LFGWKVCFPLTLINLIFTALI).

It belongs to the complex I subunit 1 family. In terms of assembly, NDH-1 is composed of 13 different subunits. Subunits NuoA, H, J, K, L, M, N constitute the membrane sector of the complex.

It localises to the cell membrane. It catalyses the reaction a quinone + NADH + 5 H(+)(in) = a quinol + NAD(+) + 4 H(+)(out). NDH-1 shuttles electrons from NADH, via FMN and iron-sulfur (Fe-S) centers, to quinones in the respiratory chain. The immediate electron acceptor for the enzyme in this species is believed to be ubiquinone. Couples the redox reaction to proton translocation (for every two electrons transferred, four hydrogen ions are translocated across the cytoplasmic membrane), and thus conserves the redox energy in a proton gradient. This subunit may bind ubiquinone. The chain is NADH-quinone oxidoreductase subunit H from Buchnera aphidicola subsp. Baizongia pistaciae (strain Bp).